The following is a 473-amino-acid chain: Vasculin (473 aa).

5 disordered regions span residues 1–26 (MAQH…SLNF), 44–163 (RRRH…EYPP), 196–240 (SQPV…SFPH), 258–286 (NFSP…QQPR), and 305–342 (LKRD…QERD). At Ser49 the chain carries Phosphoserine. Omega-N-methylarginine is present on Arg87. Positions 93–107 (GSSRSRSSIFHSGKS) are enriched in low complexity. Basic and acidic residues predominate over residues 119–133 (ETGRKDDKRERKQFE). A phosphoserine mark is found at Ser274, Ser276, Ser322, and Ser381. The span at 305 to 329 (LKRDRVEEEHEDESHVGSEKDDDSF) shows a compositional bias: basic and acidic residues. The segment at 444-473 (GPWKNSTFKPTIENDDTETSSSDTSDDDDV) is disordered. Acidic residues predominate over residues 456–473 (ENDDTETSSSDTSDDDDV).

This sequence belongs to the vasculin family. As to quaternary structure, interacts with GTF2B, GTF2F2, RNA polymerase II and TBP.

The protein resides in the nucleus. In terms of biological role, functions as a GC-rich promoter-specific transactivating transcription factor. The sequence is that of Vasculin (GPBP1) from Bos taurus (Bovine).